Here is an 869-residue protein sequence, read N- to C-terminus: Bifunctional uridylyltransferase/uridylyl-removing enzyme (869 aa).

The interval 1 to 332 (MTDTPAERPD…QFDGEATPEP (332 aa)) is uridylyltransferase. Residues 333–691 (LGGGFSLRRG…RRAVPDNDAL (359 aa)) are uridylyl-removing. Positions 450-572 (VDQHTLMVLR…VGTRERLDYL (123 aa)) constitute an HD domain. ACT domains are found at residues 692 to 774 (EVFV…RAVP) and 798 to 869 (RISL…LDPV).

Belongs to the GlnD family. Requires Mg(2+) as cofactor.

It catalyses the reaction [protein-PII]-L-tyrosine + UTP = [protein-PII]-uridylyl-L-tyrosine + diphosphate. It carries out the reaction [protein-PII]-uridylyl-L-tyrosine + H2O = [protein-PII]-L-tyrosine + UMP + H(+). Its activity is regulated as follows. Uridylyltransferase (UTase) activity is inhibited by glutamine, while glutamine activates uridylyl-removing (UR) activity. Its function is as follows. Modifies, by uridylylation and deuridylylation, the PII regulatory proteins (GlnB and homologs), in response to the nitrogen status of the cell that GlnD senses through the glutamine level. Under low glutamine levels, catalyzes the conversion of the PII proteins and UTP to PII-UMP and PPi, while under higher glutamine levels, GlnD hydrolyzes PII-UMP to PII and UMP (deuridylylation). Thus, controls uridylylation state and activity of the PII proteins, and plays an important role in the regulation of nitrogen assimilation and metabolism. This Xanthomonas euvesicatoria pv. vesicatoria (strain 85-10) (Xanthomonas campestris pv. vesicatoria) protein is Bifunctional uridylyltransferase/uridylyl-removing enzyme.